Here is a 378-residue protein sequence, read N- to C-terminus: D-alanine--D-alanine ligase (378 aa).

An ATP-grasp domain is found at 140 to 346 (KKIISQAGIR…YSDLIDRLIQ (207 aa)). 170–225 (EEKLGNLTFVKPAKQGSSVGIHRVTNAEEYEKALDDAFKYDYKILVEQGIANPQEI) is an ATP binding site. Aspartate 300, glutamate 313, and asparagine 315 together coordinate Mg(2+).

It belongs to the D-alanine--D-alanine ligase family. Requires Mg(2+) as cofactor. It depends on Mn(2+) as a cofactor.

The protein localises to the cytoplasm. It catalyses the reaction 2 D-alanine + ATP = D-alanyl-D-alanine + ADP + phosphate + H(+). It functions in the pathway cell wall biogenesis; peptidoglycan biosynthesis. Its function is as follows. Cell wall formation. The polypeptide is D-alanine--D-alanine ligase (Limosilactobacillus reuteri (strain DSM 20016) (Lactobacillus reuteri)).